The chain runs to 613 residues: RNA polymerase-associated protein RTF1 homolog (613 aa).

2 disordered regions span residues 1–90 (MSSS…DKAR) and 121–247 (QQLA…KDKI). The segment covering 55-68 (PAKKKTLTKRKRRA) has biased composition (basic residues). Residues 72-81 (SDDDQVDDDL) show a composition bias toward acidic residues. Residues 167 to 176 (AAFHRPSDIN) show a composition bias toward basic and acidic residues. A coiled-coil region spans residues 175–209 (INRKHKEKNAMDALKNKRKEIEKKNAKNEALSIDA). Positions 215-235 (SGSSSSSSSSESSRSSSSSRE) are enriched in low complexity. Over residues 236–247 (SSPERVSEKDKI) the composition is skewed to basic and acidic residues. Positions 252-383 (VDGLSELRRA…KKQDIEKAIN (132 aa)) constitute a Plus3 domain. A coiled-coil region spans residues 425 to 462 (RGDIREAEQIQTKIDEIERQADELEKERSKSISAIAFI). 2 disordered regions span residues 485–549 (SQDD…KTDI) and 564–613 (LKDF…SSAV). The span at 510 to 521 (TLSASSSTTNLS) shows a compositional bias: low complexity. A compositionally biased stretch (polar residues) spans 569–586 (TPESSGNKRPSISSSKGV). The span at 602–613 (GSSTSAAPSSAV) shows a compositional bias: low complexity.

As to quaternary structure, component of the PAF1 complex which consists of at least cdc-73, ctr-9, leo-1, pafo-1 and rtfo-1.

The protein localises to the nucleus. In terms of biological role, component of the PAF1 complex which is a multifunctional complex involved in transcription initiation via genetic interactions with TATA-binding proteins, elongation and transcription-coupled histone modification. This is RNA polymerase-associated protein RTF1 homolog from Caenorhabditis elegans.